The sequence spans 928 residues: cGMP-dependent 3',5'-cyclic phosphodiesterase (928 aa).

Ser109 carries the post-translational modification Phosphoserine. The tract at residues 188-210 (RRPEAVQNTSADPSEDQKDEKGY) is disordered. 2 consecutive GAF domains span residues 228–365 (DATS…GTVL) and 397–536 (DVSV…GISI). Residues Ser419, Asp434, Ile453, Tyr476, and Thr487 each contribute to the 3',5'-cyclic GMP site. Positions 566 to 890 (SDDEYTKLLH…EHWTKVSHKF (325 aa)) constitute a PDEase domain. The active-site Proton donor is the His644. Residues His648, His684, Asp685, and Asp796 each coordinate Zn(2+). Asp685 provides a ligand contact to Mg(2+).

Belongs to the cyclic nucleotide phosphodiesterase family. PDE2 subfamily. In terms of assembly, homodimer. It depends on Zn(2+) as a cofactor. Mg(2+) is required as a cofactor. As to expression, expressed in brain and liver.

It localises to the cell membrane. Its subcellular location is the cytoplasm. The protein localises to the mitochondrion matrix. It is found in the mitochondrion inner membrane. The protein resides in the mitochondrion outer membrane. The catalysed reaction is a nucleoside 3',5'-cyclic phosphate + H2O = a nucleoside 5'-phosphate + H(+). It catalyses the reaction 3',5'-cyclic GMP + H2O = GMP + H(+). It carries out the reaction 3',5'-cyclic AMP + H2O = AMP + H(+). The 3',5'-cyclic-AMP phosphodiesterase activity is stimulated by 3',5'-cyclic GMP. Specifically inhibited by Bay 60-7550. When repressed, protected from ionomycin- but not staurosporin-induced cell death. In terms of biological role, cGMP-activated cyclic nucleotide phosphodiesterase with a dual-specificity for the second messengers cAMP and cGMP, which are key regulators of many important physiological processes. Has a higher efficiency with cGMP compared to cAMP. Plays a role in cell growth and migration. Regulates mitochondrial cAMP levels and respiration. Involved in the regulation of mitochondria morphology/dynamics and apoptotic cell death via local modulation of cAMP/PKA signaling in the mitochondrion, including the monitoring of local cAMP levels at the outer mitochondrial membrane and of PKA-dependent phosphorylation of Dnm1l. This chain is cGMP-dependent 3',5'-cyclic phosphodiesterase, found in Rattus norvegicus (Rat).